The primary structure comprises 486 residues: Glutamate--tRNA ligase (486 aa).

Positions 11–21 (PSPTGLLHIGN) match the 'HIGH' region motif. The 'KMSKS' region signature appears at 255–259 (KLSKR). Lys258 contacts ATP.

Belongs to the class-I aminoacyl-tRNA synthetase family. Glutamate--tRNA ligase type 1 subfamily. Monomer.

It is found in the cytoplasm. It carries out the reaction tRNA(Glu) + L-glutamate + ATP = L-glutamyl-tRNA(Glu) + AMP + diphosphate. Its function is as follows. Catalyzes the attachment of glutamate to tRNA(Glu) in a two-step reaction: glutamate is first activated by ATP to form Glu-AMP and then transferred to the acceptor end of tRNA(Glu). In Streptococcus pneumoniae serotype 19F (strain G54), this protein is Glutamate--tRNA ligase.